Consider the following 241-residue polypeptide: Small ribosomal subunit protein uS2 (241 aa).

This sequence belongs to the universal ribosomal protein uS2 family.

This Salmonella choleraesuis (strain SC-B67) protein is Small ribosomal subunit protein uS2.